A 481-amino-acid polypeptide reads, in one-letter code: Vanillin dehydrogenase (481 aa).

228–233 (GSTHVG) provides a ligand contact to NAD(+). Active-site residues include glutamate 250 and cysteine 284.

Belongs to the aldehyde dehydrogenase family.

It catalyses the reaction vanillin + NAD(+) + H2O = vanillate + NADH + 2 H(+). Catalyzes the NAD-dependent oxidation of vanillin to vanillic acid. This is Vanillin dehydrogenase (vdh) from Pseudomonas sp. (strain HR199 / DSM 7063).